The following is a 148-amino-acid chain: Putative antiporter subunit mnhG2 (148 aa).

3 consecutive transmembrane segments (helical) span residues 11–31 (IAAI…IGLI), 51–71 (VLLT…YLSV), and 72–92 (RLIL…HLIS). The segment at 125-148 (EQLKQRAHEREERRRKTYEKEHDY) is disordered. Over residues 127-148 (LKQRAHEREERRRKTYEKEHDY) the composition is skewed to basic and acidic residues.

Belongs to the CPA3 antiporters (TC 2.A.63) subunit G family. May form a heterooligomeric complex that consists of seven subunits: mnhA2, mnhB2, mnhC2, mnhD2, mnhE2, mnhF2 and mnhG2.

It localises to the cell membrane. This is Putative antiporter subunit mnhG2 (mnhG2) from Staphylococcus saprophyticus subsp. saprophyticus (strain ATCC 15305 / DSM 20229 / NCIMB 8711 / NCTC 7292 / S-41).